A 370-amino-acid chain; its full sequence is tRNA-specific 2-thiouridylase MnmA (370 aa).

ATP contacts are provided by residues 7 to 14 and Met-34; that span reads ALSGGVDS. The tract at residues 104-106 is interaction with target base in tRNA; that stretch reads NPD. Cys-109 functions as the Nucleophile in the catalytic mechanism. Cys-109 and Cys-202 are oxidised to a cystine. ATP is bound at residue Gly-134. Residues 152–154 are interaction with tRNA; sequence KDQ. Residue Cys-202 is the Cysteine persulfide intermediate of the active site. Residues 308–309 form an interaction with tRNA region; the sequence is RY.

Belongs to the MnmA/TRMU family.

The protein resides in the cytoplasm. It carries out the reaction S-sulfanyl-L-cysteinyl-[protein] + uridine(34) in tRNA + AH2 + ATP = 2-thiouridine(34) in tRNA + L-cysteinyl-[protein] + A + AMP + diphosphate + H(+). In terms of biological role, catalyzes the 2-thiolation of uridine at the wobble position (U34) of tRNA, leading to the formation of s(2)U34. This is tRNA-specific 2-thiouridylase MnmA from Mycoplasma mobile (strain ATCC 43663 / 163K / NCTC 11711) (Mesomycoplasma mobile).